The sequence spans 166 residues: Probable RNA-binding protein EIF1AD (166 aa).

In terms of domain architecture, S1-like spans threonine 5–cysteine 89. A Nuclear localization signal motif is present at residues lysine 6–lysine 12. Threonine 33 is subject to Phosphothreonine. The Nuclear localization signal motif lies at lysine 56–arginine 65. Residues asparagine 114 to alanine 166 are disordered. 6 positions are modified to phosphoserine: serine 132, serine 136, serine 137, serine 138, serine 156, and serine 160. Acidic residues predominate over residues serine 156–alanine 166.

The protein belongs to the EIF1AD family. As to quaternary structure, interacts with GAPDH and STAT1.

The protein localises to the nucleus. Its function is as follows. Plays a role into cellular response to oxidative stress. Decreases cell proliferation. The polypeptide is Probable RNA-binding protein EIF1AD (EIF1AD) (Pongo abelii (Sumatran orangutan)).